The primary structure comprises 436 residues: uncharacterized protein (436 aa).

The first 19 residues, 1–19, serve as a signal peptide directing secretion; sequence MKKLLLASIIGLASTTSFA.

This is an uncharacterized protein from Rickettsia bellii (strain RML369-C).